Here is a 3029-residue protein sequence, read N- to C-terminus: Polycystin-1-related protein (3029 aa).

Positions Met1–Ala21 are cleaved as a signal peptide. Residues Lys22 to Pro1685 lie on the Extracellular side of the membrane. Positions Val29–Ala121 constitute a WSC domain. 2 consecutive PKD domains span residues Glu364–Val450 and Asp546–Tyr634. The REJ domain maps to Cys633–Thr1476. 3 disordered regions span residues Arg754–Glu773, Cys909–Pro931, and Thr989–Pro1051. Residues Val918–Pro931 show a composition bias toward polar residues. Residues Ser997–Ser1013 are compositionally biased toward acidic residues. Positions Thr1020–Lys1047 are enriched in polar residues. The region spanning Arg1525–His1671 is the GAIN-B domain. 2 cysteine pairs are disulfide-bonded: Cys1624–Cys1651 and Cys1639–Cys1653. Residues Cys1624 to His1671 are GPS. A helical membrane pass occupies residues Leu1686 to Val1706. The Cytoplasmic segment spans residues Lys1707 to Arg1895. Residues Ser1733 to Phe1851 enclose the PLAT domain. A helical membrane pass occupies residues Leu1896–Pro1916. Residues Lys1917–Ser1933 are Extracellular-facing. Residues Ile1934–Phe1954 traverse the membrane as a helical segment. Topologically, residues Phe1955 to Gly2101 are cytoplasmic. Residues Phe2102 to Ile2122 form a helical membrane-spanning segment. The Extracellular segment spans residues Trp2123–Leu2140. The helical transmembrane segment at Val2141 to Phe2161 threads the bilayer. The Cytoplasmic segment spans residues Tyr2162–Tyr2250. The helical transmembrane segment at Val2251–Val2271 threads the bilayer. Residues Ala2272–Lys2462 are Extracellular-facing. The chain crosses the membrane as a helical span at residues Leu2463–Met2483. The Cytoplasmic portion of the chain corresponds to Thr2484 to Gln2496. A helical transmembrane segment spans residues Leu2497–Leu2517. The Extracellular portion of the chain corresponds to Tyr2518–Gln2538. The helical transmembrane segment at Ile2539–Ile2559 threads the bilayer. Topologically, residues Arg2560–Leu2586 are cytoplasmic. Residues Ala2587–Phe2607 form a helical membrane-spanning segment. Topologically, residues Gly2608 to Tyr2651 are extracellular. The helical transmembrane segment at Phe2652 to Leu2672 threads the bilayer. Residues His2673–Met3029 are Cytoplasmic-facing. The disordered stretch occupies residues Lys2704–Leu2726. The segment covering Asp2716–Leu2726 has biased composition (acidic residues).

Belongs to the polycystin family. In terms of assembly, heterodimer of 2 chains generated by proteolytic processing; the large extracellular N-terminal fragment and the membrane-bound C-terminal fragment predominantly remain associated and non-covalently linked. In terms of processing, autoproteolytically processed at the GPS region of the GAIN-B domain; this cleavage modulates receptor activity. As to expression, component of the acid-insoluble and acid-soluble organic matrix of the aragonitic skeleton (at protein level).

It localises to the membrane. In Acropora millepora (Staghorn coral), this protein is Polycystin-1-related protein.